Consider the following 156-residue polypeptide: Small ribosomal subunit protein uS7 (156 aa).

This sequence belongs to the universal ribosomal protein uS7 family. As to quaternary structure, part of the 30S ribosomal subunit. Contacts proteins S9 and S11.

One of the primary rRNA binding proteins, it binds directly to 16S rRNA where it nucleates assembly of the head domain of the 30S subunit. Is located at the subunit interface close to the decoding center, probably blocks exit of the E-site tRNA. The protein is Small ribosomal subunit protein uS7 of Synechococcus sp. (strain WH7803).